The sequence spans 428 residues: Histidine--tRNA ligase (428 aa).

It belongs to the class-II aminoacyl-tRNA synthetase family. As to quaternary structure, homodimer.

It localises to the cytoplasm. It catalyses the reaction tRNA(His) + L-histidine + ATP = L-histidyl-tRNA(His) + AMP + diphosphate + H(+). This chain is Histidine--tRNA ligase, found in Mesomycoplasma hyopneumoniae (strain 7448) (Mycoplasma hyopneumoniae).